Here is a 684-residue protein sequence, read N- to C-terminus: MENKNDMFNKTPKSGKPKMFRFNLYWMYGLIFIMLVALYMTNDSSGTKELGWTEFQKLAQENVFDKMTVYNKKNLVEATVKNGKTEQVFGNMDVSKIGVSPKVYVKIPSADKFSDFYDKAVADSHIDTQVRFEEGDDAIWNFLVSFGPIILLIGVWMFLMRRMSGGTGAGPGGVFSVGKAKAQLFDKDNDRKVTFKDVAGLAEAKQEVEEIVSFLKNPEKYTELGGKIPKGALLVGPPGTGKTLLAKAVAGEANVPFFSLSGSDFVEMFVGVGASRVRDLFRQAKEKSPCIVFIDEIDAVGRARGKNANMNSNDERENTLNQLLTEMDGFGSNSGVIILAATNRADILDKALLRAGRFDRQIHVELPDLNERKEIFGVHLRPIKIDESVDAEFLARQTPGFSGADIANVCNEAALIAARNGKKFVQKEDFMNAVDRIVGGLEKRSKITTEEERKCIANHEAGHATLSWLLEHANPLVKVTIVPRGKALGAAWYLPEERQITTREQLQDEMCATLGGRAAEELVLGKISTGASNDLERVTKQAYAMVVYFGMSDKLPNLNYYDSTGQDWGFTKPYSEETAKLIDTEVQKIINEQYDRAKRILSENKEGHSKLAQVLLDREVIYSEDVEHIFGKRAWISRSQEILELQEKANGKNKENADKEAEADATTENVTDTPTEENKTGKIA.

Over 1-21 (MENKNDMFNKTPKSGKPKMFR) the chain is Cytoplasmic. The helical transmembrane segment at 22-42 (FNLYWMYGLIFIMLVALYMTN) threads the bilayer. At 43–138 (DSSGTKELGW…QVRFEEGDDA (96 aa)) the chain is on the periplasmic side. The chain crosses the membrane as a helical span at residues 139-159 (IWNFLVSFGPIILLIGVWMFL). The Cytoplasmic portion of the chain corresponds to 160–684 (MRRMSGGTGA…TEENKTGKIA (525 aa)). 236–243 (GPPGTGKT) provides a ligand contact to ATP. Residue His459 coordinates Zn(2+). The active site involves Glu460. Zn(2+) is bound by residues His463 and Asp534. Residues 647–662 (EKANGKNKENADKEAE) show a composition bias toward basic and acidic residues. Residues 647-684 (EKANGKNKENADKEAEADATTENVTDTPTEENKTGKIA) are disordered.

In the central section; belongs to the AAA ATPase family. The protein in the C-terminal section; belongs to the peptidase M41 family. Homohexamer. It depends on Zn(2+) as a cofactor.

Its subcellular location is the cell inner membrane. In terms of biological role, acts as a processive, ATP-dependent zinc metallopeptidase for both cytoplasmic and membrane proteins. Plays a role in the quality control of integral membrane proteins. The polypeptide is ATP-dependent zinc metalloprotease FtsH (Parabacteroides distasonis (strain ATCC 8503 / DSM 20701 / CIP 104284 / JCM 5825 / NCTC 11152)).